We begin with the raw amino-acid sequence, 275 residues long: Putative protein A464R (275 aa).

The RNase III domain maps to K51–G175. Residues N201–V269 form the DRBM domain.

This sequence belongs to the ribonuclease III family.

The polypeptide is Putative protein A464R (Chlorella (PBCV-1)).